Reading from the N-terminus, the 210-residue chain is Riboflavin kinase (210 aa).

Residues Met-1–Ser-81 form an H-T-H motif-like region. Residues Ile-82–Leu-210 are riboflavin kinase. Gly-91 to Ala-96 contributes to the CDP binding site. Mg(2+) is bound by residues Thr-120 and Asn-122. Residues Thr-177 and Glu-185 each coordinate FMN. Val-190–Arg-193 lines the CDP pocket.

This sequence belongs to the archaeal riboflavin kinase family. The cofactor is Mg(2+).

The catalysed reaction is riboflavin + CTP = CDP + FMN + H(+). It functions in the pathway cofactor biosynthesis; FMN biosynthesis; FMN from riboflavin (CTP route): step 1/1. Catalyzes the CTP-dependent phosphorylation of riboflavin (vitamin B2) to form flavin mononucleotide (FMN). The polypeptide is Riboflavin kinase (ribK) (Pyrobaculum arsenaticum (strain DSM 13514 / JCM 11321 / PZ6)).